The chain runs to 572 residues: Isocitrate lyase (572 aa).

104–106 (SGW) contributes to the substrate binding site. Asp-175 serves as a coordination point for Mg(2+). Residue Cys-213 is the Proton acceptor of the active site. Residues 214-215 (GH), Arg-250, 437-441 (NLSPS), and Thr-472 each bind substrate. A disordered region spans residues 550 to 572 (QFKGSWTGPGSESSSHVLAKSRM). The Microbody targeting signal signature appears at 570 to 572 (SRM).

This sequence belongs to the isocitrate lyase/PEP mutase superfamily. Isocitrate lyase family. It depends on Mg(2+) as a cofactor. As to expression, expressed in leaves.

It localises to the glyoxysome. The enzyme catalyses D-threo-isocitrate = glyoxylate + succinate. Its pathway is carbohydrate metabolism; glyoxylate cycle; (S)-malate from isocitrate: step 1/2. In terms of biological role, involved in storage lipid mobilization during the growth of higher plant seedling. The sequence is that of Isocitrate lyase from Oryza sativa subsp. japonica (Rice).